The following is a 172-amino-acid chain: Peptide deformylase (172 aa).

The Fe cation site is built by cysteine 94 and histidine 136. Residue glutamate 137 is part of the active site. Histidine 140 serves as a coordination point for Fe cation.

It belongs to the polypeptide deformylase family. It depends on Fe(2+) as a cofactor.

It carries out the reaction N-terminal N-formyl-L-methionyl-[peptide] + H2O = N-terminal L-methionyl-[peptide] + formate. Functionally, removes the formyl group from the N-terminal Met of newly synthesized proteins. Requires at least a dipeptide for an efficient rate of reaction. N-terminal L-methionine is a prerequisite for activity but the enzyme has broad specificity at other positions. This Pelagibacter ubique (strain HTCC1062) protein is Peptide deformylase.